A 137-amino-acid chain; its full sequence is Competence protein D (137 aa).

Functionally, involved in transformation (genetic competence for DNA uptake). The protein is Competence protein D (comD) of Haemophilus influenzae (strain ATCC 51907 / DSM 11121 / KW20 / Rd).